The sequence spans 448 residues: Squalene synthase ERG9 (448 aa).

The helical transmembrane segment at 428–448 (CNVVLFGIGALILSLIYFVLY) threads the bilayer.

The protein belongs to the phytoene/squalene synthase family. It depends on Mg(2+) as a cofactor.

The protein resides in the endoplasmic reticulum membrane. It is found in the microsome. It catalyses the reaction 2 (2E,6E)-farnesyl diphosphate + NADPH + H(+) = squalene + 2 diphosphate + NADP(+). It carries out the reaction 2 (2E,6E)-farnesyl diphosphate + NADH + H(+) = squalene + 2 diphosphate + NAD(+). It functions in the pathway terpene metabolism; lanosterol biosynthesis; lanosterol from farnesyl diphosphate: step 1/3. Its function is as follows. Squalene synthase; part of the third module of ergosterol biosynthesis pathway that includes the late steps of the pathway. ERG9 produces squalene from 2 farnesyl pyrophosphate moieties. The third module or late pathway involves the ergosterol synthesis itself through consecutive reactions that mainly occur in the endoplasmic reticulum (ER) membrane. Firstly, the squalene synthase ERG9 catalyzes the condensation of 2 farnesyl pyrophosphate moieties to form squalene, which is the precursor of all steroids. Squalene synthase is crucial for balancing the incorporation of farnesyl diphosphate (FPP) into sterol and nonsterol isoprene synthesis. Secondly, the squalene epoxidase ERG1 catalyzes the stereospecific oxidation of squalene to (S)-2,3-epoxysqualene, which is considered to be a rate-limiting enzyme in steroid biosynthesis. Then, the lanosterol synthase ERG7 catalyzes the cyclization of (S)-2,3 oxidosqualene to lanosterol, a reaction that forms the sterol core. In the next steps, lanosterol is transformed to zymosterol through a complex process involving various demethylation, reduction and desaturation reactions. The lanosterol 14-alpha-demethylase ERG11 (also known as CYP51) catalyzes C14-demethylation of lanosterol to produce 4,4'-dimethyl cholesta-8,14,24-triene-3-beta-ol, which is critical for ergosterol biosynthesis. The C-14 reductase ERG24 reduces the C14=C15 double bond of 4,4-dimethyl-cholesta-8,14,24-trienol to produce 4,4-dimethyl-cholesta-8,24-dienol. 4,4-dimethyl-cholesta-8,24-dienol is substrate of the C-4 demethylation complex ERG25-ERG26-ERG27 in which ERG25 catalyzes the three-step monooxygenation required for the demethylation of 4,4-dimethyl and 4alpha-methylsterols, ERG26 catalyzes the oxidative decarboxylation that results in a reduction of the 3-beta-hydroxy group at the C-3 carbon to an oxo group, and ERG27 is responsible for the reduction of the keto group on the C-3. ERG28 has a role as a scaffold to help anchor ERG25, ERG26 and ERG27 to the endoplasmic reticulum and ERG29 regulates the activity of the iron-containing C4-methylsterol oxidase ERG25. Then, the sterol 24-C-methyltransferase ERG6 catalyzes the methyl transfer from S-adenosyl-methionine to the C-24 of zymosterol to form fecosterol. The C-8 sterol isomerase ERG2 catalyzes the reaction which results in unsaturation at C-7 in the B ring of sterols and thus converts fecosterol to episterol. The sterol-C5-desaturase ERG3 then catalyzes the introduction of a C-5 double bond in the B ring to produce 5-dehydroepisterol. The C-22 sterol desaturase ERG5 further converts 5-dehydroepisterol into ergosta-5,7,22,24(28)-tetraen-3beta-ol by forming the C-22(23) double bond in the sterol side chain. Finally, ergosta-5,7,22,24(28)-tetraen-3beta-ol is substrate of the C-24(28) sterol reductase ERG4 to produce ergosterol. In Candida albicans (strain SC5314 / ATCC MYA-2876) (Yeast), this protein is Squalene synthase ERG9.